A 249-amino-acid chain; its full sequence is Sugar fermentation stimulation protein homolog (249 aa).

The protein belongs to the SfsA family.

This chain is Sugar fermentation stimulation protein homolog, found in Rhizobium rhizogenes (strain K84 / ATCC BAA-868) (Agrobacterium radiobacter).